The primary structure comprises 990 residues: Chondroitin sulfate ABC exolyase (990 aa).

Catalysis depends on His453, which acts as the Proton acceptor. Catalysis depends on Tyr460, which acts as the Proton donor.

It belongs to the polysaccharide lyase 8 family.

It catalyses the reaction Exolytic removal of Delta(4)-unsaturated disaccharide residues from the non-reducing ends of both polymeric chondroitin/dermatan sulfates and their oligosaccharide fragments.. Inhibited by Zn(2+), whereas Ni(2+), Fe(2+), and Cu(2+) have little or no effect on activity. Broad-specificity glycosaminoglycan lyase, which acts in an exolytic fashion, and preferentially degrades the tetra- and hexasaccharide derivatives of chondroitin sulfate and dermatan sulfate produced by the chondroitin sulfate ABC endolyase, to yield the respective disaccharides. To a lesser extent, is also able to split off disaccharide residues directly from polymeric chondroitin 4- and 6-sulfate, dermatan sulfate, chondroitin, and hyaluronan. Is not active against keratan sulfate, heparan sulfate, and heparin. The sequence is that of Chondroitin sulfate ABC exolyase (ChABCII) from Proteus vulgaris.